The following is a 95-amino-acid chain: Co-chaperonin GroES (95 aa).

It belongs to the GroES chaperonin family. Heptamer of 7 subunits arranged in a ring. Interacts with the chaperonin GroEL.

The protein resides in the cytoplasm. In terms of biological role, together with the chaperonin GroEL, plays an essential role in assisting protein folding. The GroEL-GroES system forms a nano-cage that allows encapsulation of the non-native substrate proteins and provides a physical environment optimized to promote and accelerate protein folding. GroES binds to the apical surface of the GroEL ring, thereby capping the opening of the GroEL channel. In Glaesserella parasuis serovar 5 (strain SH0165) (Haemophilus parasuis), this protein is Co-chaperonin GroES.